The sequence spans 245 residues: NAD-dependent protein deacetylase (245 aa).

Positions 1–245 (MIFVQQFEEV…EFVEGLSSMK (245 aa)) constitute a Deacetylase sirtuin-type domain. NAD(+)-binding residues include A26, T30, F37, R38, Q105, I107, D108, and H123. F37 is a nicotinamide binding site. The nicotinamide site is built by I107 and D108. Catalysis depends on H123, which acts as the Proton acceptor. Residues C131, C134, C151, and C154 each contribute to the Zn(2+) site. 4 residues coordinate NAD(+): T190, S191, N216, and I234.

The protein belongs to the sirtuin family. Class U subfamily. Zn(2+) serves as cofactor.

The protein resides in the cytoplasm. It carries out the reaction N(6)-acetyl-L-lysyl-[protein] + NAD(+) + H2O = 2''-O-acetyl-ADP-D-ribose + nicotinamide + L-lysyl-[protein]. Its function is as follows. NAD-dependent protein deacetylase which modulates the activities of several enzymes which are inactive in their acetylated form. The sequence is that of NAD-dependent protein deacetylase from Bacillus cereus (strain ATCC 14579 / DSM 31 / CCUG 7414 / JCM 2152 / NBRC 15305 / NCIMB 9373 / NCTC 2599 / NRRL B-3711).